The sequence spans 369 residues: Ribosomal RNA large subunit methyltransferase G (369 aa).

Belongs to the methyltransferase superfamily. RlmG family.

The protein resides in the cytoplasm. The catalysed reaction is guanosine(1835) in 23S rRNA + S-adenosyl-L-methionine = N(2)-methylguanosine(1835) in 23S rRNA + S-adenosyl-L-homocysteine + H(+). Functionally, specifically methylates the guanine in position 1835 (m2G1835) of 23S rRNA. This chain is Ribosomal RNA large subunit methyltransferase G, found in Magnetococcus marinus (strain ATCC BAA-1437 / JCM 17883 / MC-1).